Reading from the N-terminus, the 342-residue chain is 3-isopropylmalate dehydrogenase (342 aa).

Substrate contacts are provided by Arg-87, Arg-97, Arg-121, and Asp-212. Mg(2+) contacts are provided by Asp-212, Asp-236, and Asp-240. Residue 272–284 (GSAPDIAGRQLAD) coordinates NAD(+). Over residues 319–328 (RAAAGAAQPS) the composition is skewed to low complexity. Residues 319–342 (RAAAGAAQPSTRERGEDLAARAAG) form a disordered region. Over residues 329–342 (TRERGEDLAARAAG) the composition is skewed to basic and acidic residues.

Belongs to the isocitrate and isopropylmalate dehydrogenases family. LeuB type 2 subfamily. Homodimer. Mg(2+) is required as a cofactor. The cofactor is Mn(2+).

Its subcellular location is the cytoplasm. The catalysed reaction is (2R,3S)-3-isopropylmalate + NAD(+) = 4-methyl-2-oxopentanoate + CO2 + NADH. Its pathway is amino-acid biosynthesis; L-leucine biosynthesis; L-leucine from 3-methyl-2-oxobutanoate: step 3/4. In terms of biological role, catalyzes the oxidation of 3-carboxy-2-hydroxy-4-methylpentanoate (3-isopropylmalate) to 3-carboxy-4-methyl-2-oxopentanoate. The product decarboxylates to 4-methyl-2 oxopentanoate. This chain is 3-isopropylmalate dehydrogenase, found in Frankia casuarinae (strain DSM 45818 / CECT 9043 / HFP020203 / CcI3).